We begin with the raw amino-acid sequence, 434 residues long: Histidinol dehydrogenase (434 aa).

Positions 130, 188, and 211 each coordinate NAD(+). Ser237, Gln259, and His262 together coordinate substrate. The Zn(2+) site is built by Gln259 and His262. Active-site proton acceptor residues include Glu326 and His327. Substrate-binding residues include His327, Asp360, Glu414, and His419. Residue Asp360 participates in Zn(2+) binding. His419 contacts Zn(2+).

Belongs to the histidinol dehydrogenase family. Homodimer. Zn(2+) serves as cofactor.

It catalyses the reaction L-histidinol + 2 NAD(+) + H2O = L-histidine + 2 NADH + 3 H(+). It participates in amino-acid biosynthesis; L-histidine biosynthesis; L-histidine from 5-phospho-alpha-D-ribose 1-diphosphate: step 9/9. Functionally, catalyzes the sequential NAD-dependent oxidations of L-histidinol to L-histidinaldehyde and then to L-histidine. The chain is Histidinol dehydrogenase from Salmonella typhi.